Here is a 968-residue protein sequence, read N- to C-terminus: RNA polymerase-associated protein RapA (968 aa).

The Helicase ATP-binding domain maps to 164–334; the sequence is DVGRRHAPRV…FARLRLLDPN (171 aa). 177–184 is an ATP binding site; sequence DEVGLGKT. The short motif at 280–283 is the DEAH box element; that stretch reads DEAH. The Helicase C-terminal domain occupies 490 to 685; that stretch reads RVEWLMGYLT…ALKAQLEQGR (196 aa).

This sequence belongs to the SNF2/RAD54 helicase family. RapA subfamily. Interacts with the RNAP. Has a higher affinity for the core RNAP than for the holoenzyme. Its ATPase activity is stimulated by binding to RNAP.

Its function is as follows. Transcription regulator that activates transcription by stimulating RNA polymerase (RNAP) recycling in case of stress conditions such as supercoiled DNA or high salt concentrations. Probably acts by releasing the RNAP, when it is trapped or immobilized on tightly supercoiled DNA. Does not activate transcription on linear DNA. Probably not involved in DNA repair. This chain is RNA polymerase-associated protein RapA, found in Salmonella typhimurium (strain LT2 / SGSC1412 / ATCC 700720).